The chain runs to 291 residues: T-cell leukemia homeobox protein 3 (291 aa).

The tract at residues 1–56 (MEAPASAQTPHPHEPISFGIDQILNSPDQDSAPAPRGPDGASYLGGPPGGRPGATY) is disordered. Positions 166-225 (RKKPRTSFSRVQICELEKRFHRQKYLASAERAALAKSLKMTDAQVKTWFQNRRTKWRRQT) form a DNA-binding region, homeobox.

It localises to the nucleus. This is T-cell leukemia homeobox protein 3 (TLX3) from Homo sapiens (Human).